The primary structure comprises 344 residues: S-adenosylmethionine:tRNA ribosyltransferase-isomerase (344 aa).

This sequence belongs to the QueA family. As to quaternary structure, monomer.

It localises to the cytoplasm. The catalysed reaction is 7-aminomethyl-7-carbaguanosine(34) in tRNA + S-adenosyl-L-methionine = epoxyqueuosine(34) in tRNA + adenine + L-methionine + 2 H(+). The protein operates within tRNA modification; tRNA-queuosine biosynthesis. Its function is as follows. Transfers and isomerizes the ribose moiety from AdoMet to the 7-aminomethyl group of 7-deazaguanine (preQ1-tRNA) to give epoxyqueuosine (oQ-tRNA). The chain is S-adenosylmethionine:tRNA ribosyltransferase-isomerase from Heliobacterium modesticaldum (strain ATCC 51547 / Ice1).